The chain runs to 223 residues: UPF0441 protein ETA_04310 (223 aa).

The disordered stretch occupies residues 166 to 223 (YGAATPGRTMTVPKSALAPKPATTSTVTRGGFGESVAKQNTMQRNSSSTGSANRSMGG). Polar residues predominate over residues 202-223 (AKQNTMQRNSSSTGSANRSMGG).

This sequence belongs to the UPF0441 family.

The chain is UPF0441 protein ETA_04310 from Erwinia tasmaniensis (strain DSM 17950 / CFBP 7177 / CIP 109463 / NCPPB 4357 / Et1/99).